Reading from the N-terminus, the 475-residue chain is Peripherin (475 aa).

Positions 1-42 (MPSSASMSHHHSSGLRSSISSTSYRRTFGPPPSLSPGAFSYS) are disordered. Residues 1 to 103 (MPSSASMSHH…FLATRSNEKQ (103 aa)) are head. Low complexity predominate over residues 14 to 26 (GLRSSISSTSYRR). Y24 carries the post-translational modification 3'-nitrotyrosine. Phosphoserine occurs at positions 35 and 57. The residue at position 66 (S66) is a Phosphoserine; by PKB/AKT1. Residues 101–411 (EKQELQELND…KLLEGEESRI (311 aa)) form the IF rod domain. A coil 1A region spans residues 104–136 (ELQELNDRFANFIEKVRFLEQQNAALRGELSQA). Residues 137–147 (RGQEPARADQL) are linker 1. Residues 148-243 (CQQELRELRR…KLHEEELRDL (96 aa)) form a coil 1B region. The segment at 244–266 (QVSVESQQVQQVEVEATVKPELT) is linker 2. The segment at 267–409 (AALRDIRAQY…YRKLLEGEES (143 aa)) is coil 2. A 3'-nitrotyrosine modification is found at Y383. Residues 410-475 (RISVPVHSFA…DLDKSSIHSY (66 aa)) form a tail region. The interval 453–475 (EKVVTESQKEQHSDLDKSSIHSY) is disordered. A Phosphotyrosine modification is found at Y475.

It belongs to the intermediate filament family. Forms homodimers (in vitro). Homopolymerizes into a filamentous network (in vitro). Forms heterodimers with NEFL, NEFM or NEFH (in vitro). Interacts with DST (via C-terminus). Interacts with RAB7A; the interaction is direct. Interacts with PRKCE (via phorbol-ester/DAG-type 2 domain). Phosphorylated; phosphorylation increases after nerve injury in regenerating neurons. As to expression, expressed in the sciatic nerve and at very low levels in the central nervous system (at protein level). Expressed in the spinal cord, in the sciatic nerve at the level of the dorsal root ganglion and in trigeminal nerves (at protein level). Expressed in the cranial nerves in the hindbrain, including the sensory and motor trigeminal neurons, the mesencephalic trigeminal neurons, the spinal trigeminal neurons, and in the facial nerve (at protein level). Expressed in the cerebellum, with expression in the inferior cerebellar peduncle and the lateral deep cerebellar nucleus (at protein level). Expressed in vestibulocochlear neurons, such as the anteroventral cochlear nucleus, the dorsal cochlear nucleus, the superficial granule cell layer and the granule cell lamina (at protein level). Expressed in glossopharyngeal, vagal and hypoglossal neurons (at protein level). Expressed in peripheral sensory neurons, in the dorsal root ganglia and the spinal cord, and to a lower extent in motor neurons. Expressed in the optic tract of the central nervous system, especially in the lateral geniculate nucleus and the superior colliculus. Expressed in neurons of the pineal stalk in the cortex. Expressed in the spinal trigeminal tract of the midbrain, in the medulla and in the medial cerebellar peduncle.

It is found in the cytoplasm. It localises to the cytoskeleton. The protein resides in the cell projection. The protein localises to the axon. Its subcellular location is the perikaryon. Class-III neuronal intermediate filament protein. May form an independent structural network without the involvement of other neurofilaments or may cooperate with the neuronal intermediate filament proteins NEFL, NEFH, NEFM and INA to form filamentous networks. Assembly of the neuronal intermediate filaments may be regulated by RAB7A. Plays a role in the development of unmyelinated sensory neurons. May be involved in axon elongation and axon regeneration after injury. Inhibits neurite extension in type II spiral ganglion neurons in the cochlea. The chain is Peripherin (Prph) from Mus musculus (Mouse).